Consider the following 245-residue polypeptide: MTFRRRLLQFLALLFVVATLAQLWYLGQVLRLQHHNPDSSAYMHRAQKQGNVQQDWRDYDQISDYLKRAVLISEDAHFTQHTGFDWEGIRYALKRNMEAGKPVAGGSTITQQLAKNLYLSGERTYTRKAQEAVIALMLEIGLSKRRILELYLNVAQWGHQIYGAEAAAQHYFQISAAQLSPLQAAQLAAMLPRPNLYDFKGPTDYVQQRASWIQAQMALVRIPDPGTVPLPPPPEPTAPPEGNTQ.

A helical transmembrane segment spans residues 10–30; that stretch reads FLALLFVVATLAQLWYLGQVL. The interval 224-245 is disordered; sequence DPGTVPLPPPPEPTAPPEGNTQ. The segment covering 226–239 has biased composition (pro residues); that stretch reads GTVPLPPPPEPTAP.

This sequence belongs to the glycosyltransferase 51 family.

The protein localises to the cell inner membrane. It catalyses the reaction [GlcNAc-(1-&gt;4)-Mur2Ac(oyl-L-Ala-gamma-D-Glu-L-Lys-D-Ala-D-Ala)](n)-di-trans,octa-cis-undecaprenyl diphosphate + beta-D-GlcNAc-(1-&gt;4)-Mur2Ac(oyl-L-Ala-gamma-D-Glu-L-Lys-D-Ala-D-Ala)-di-trans,octa-cis-undecaprenyl diphosphate = [GlcNAc-(1-&gt;4)-Mur2Ac(oyl-L-Ala-gamma-D-Glu-L-Lys-D-Ala-D-Ala)](n+1)-di-trans,octa-cis-undecaprenyl diphosphate + di-trans,octa-cis-undecaprenyl diphosphate + H(+). The protein operates within cell wall biogenesis; peptidoglycan biosynthesis. Peptidoglycan polymerase that catalyzes glycan chain elongation from lipid-linked precursors. The chain is Biosynthetic peptidoglycan transglycosylase from Alcanivorax borkumensis (strain ATCC 700651 / DSM 11573 / NCIMB 13689 / SK2).